A 188-amino-acid chain; its full sequence is Preprocaerulein type-1 (188 aa).

An N-terminal signal peptide occupies residues 1–26; the sequence is MFKGILLCVLFAVLSANPLSQPEGFA. Positions 27 to 170 are excised as a propeptide; it reads DEERDVRGLA…ANDERRFADG (144 aa). The disordered stretch occupies residues 152–188; the sequence is LGGSPQQREANDERRFADGQQDYTGWMDFGRRNGEDD. Tyrosine 174 carries the post-translational modification Sulfotyrosine. Phenylalanine 180 is modified (phenylalanine amide). Positions 184–188 are excised as a propeptide; it reads NGEDD.

Belongs to the gastrin/cholecystokinin family. Expressed by the skin glands.

It is found in the secreted. In terms of biological role, the pharmacological activities of caerulein are quite similar to the physiological activities of gastrin and related peptides. In Xenopus laevis (African clawed frog), this protein is Preprocaerulein type-1.